We begin with the raw amino-acid sequence, 150 residues long: MRIVVQRVSHASVTIEGQCKSSIGKGMLILVGIEESDGQEDIDWLCKKIVNLRIFDDESGVMNKSILEDGGEILVISQFTLHASTKKGNRPSYIKAAKPEISVPLYERFCKDLSRALGKEIGTGTFGADMKVELLNDGPVTICMDTKNKE.

Positions 138 to 139 (GP) match the Gly-cisPro motif, important for rejection of L-amino acids motif.

This sequence belongs to the DTD family. In terms of assembly, homodimer.

The protein resides in the cytoplasm. It catalyses the reaction glycyl-tRNA(Ala) + H2O = tRNA(Ala) + glycine + H(+). It carries out the reaction a D-aminoacyl-tRNA + H2O = a tRNA + a D-alpha-amino acid + H(+). Functionally, an aminoacyl-tRNA editing enzyme that deacylates mischarged D-aminoacyl-tRNAs. Also deacylates mischarged glycyl-tRNA(Ala), protecting cells against glycine mischarging by AlaRS. Acts via tRNA-based rather than protein-based catalysis; rejects L-amino acids rather than detecting D-amino acids in the active site. By recycling D-aminoacyl-tRNA to D-amino acids and free tRNA molecules, this enzyme counteracts the toxicity associated with the formation of D-aminoacyl-tRNA entities in vivo and helps enforce protein L-homochirality. The sequence is that of D-aminoacyl-tRNA deacylase from Bacteroides thetaiotaomicron (strain ATCC 29148 / DSM 2079 / JCM 5827 / CCUG 10774 / NCTC 10582 / VPI-5482 / E50).